A 570-amino-acid polypeptide reads, in one-letter code: Hydroxylamine reductase (570 aa).

[4Fe-4S] cluster-binding residues include C5, C8, C17, and C23. Hybrid [4Fe-2O-2S] cluster contacts are provided by H266, E290, C334, C425, C453, C478, E513, and K515. C425 is modified (cysteine persulfide).

This sequence belongs to the HCP family. The cofactor is [4Fe-4S] cluster. It depends on hybrid [4Fe-2O-2S] cluster as a cofactor.

It is found in the cytoplasm. The enzyme catalyses A + NH4(+) + H2O = hydroxylamine + AH2 + H(+). Catalyzes the reduction of hydroxylamine to form NH(3) and H(2)O. This is Hydroxylamine reductase from Clostridium tetani (strain Massachusetts / E88).